A 110-amino-acid chain; its full sequence is UPF0060 membrane protein PBPRB0495 (110 aa).

4 consecutive transmembrane segments (helical) span residues 7 to 27, 33 to 53, 63 to 83, and 85 to 105; these read VGLF…PYLW, TIWL…LLTL, AAYG…VDGI, and PTVW…IIMF.

It belongs to the UPF0060 family.

Its subcellular location is the cell inner membrane. This is UPF0060 membrane protein PBPRB0495 from Photobacterium profundum (strain SS9).